A 211-amino-acid polypeptide reads, in one-letter code: SsrA-binding protein (211 aa).

2 disordered regions span residues 1-20 (MHRRSSKSYSSRNSKTPERS) and 170-211 (RLRR…RHEN). A compositionally biased stretch (polar residues) spans 177–187 (QRNTQRSVTPR).

The protein belongs to the SmpB family.

It is found in the cytoplasm. Required for rescue of stalled ribosomes mediated by trans-translation. Binds to transfer-messenger RNA (tmRNA), required for stable association of tmRNA with ribosomes. tmRNA and SmpB together mimic tRNA shape, replacing the anticodon stem-loop with SmpB. tmRNA is encoded by the ssrA gene; the 2 termini fold to resemble tRNA(Ala) and it encodes a 'tag peptide', a short internal open reading frame. During trans-translation Ala-aminoacylated tmRNA acts like a tRNA, entering the A-site of stalled ribosomes, displacing the stalled mRNA. The ribosome then switches to translate the ORF on the tmRNA; the nascent peptide is terminated with the 'tag peptide' encoded by the tmRNA and targeted for degradation. The ribosome is freed to recommence translation, which seems to be the essential function of trans-translation. This is SsrA-binding protein from Tropheryma whipplei (strain TW08/27) (Whipple's bacillus).